The sequence spans 197 residues: Dephospho-CoA kinase (197 aa).

Positions 5-197 (RLGLTGSIGM…IAHIRETADA (193 aa)) constitute a DPCK domain. 13-18 (GMGKST) is a binding site for ATP.

It belongs to the CoaE family.

It is found in the cytoplasm. It catalyses the reaction 3'-dephospho-CoA + ATP = ADP + CoA + H(+). Its pathway is cofactor biosynthesis; coenzyme A biosynthesis; CoA from (R)-pantothenate: step 5/5. Catalyzes the phosphorylation of the 3'-hydroxyl group of dephosphocoenzyme A to form coenzyme A. This is Dephospho-CoA kinase from Cereibacter sphaeroides (strain ATCC 17023 / DSM 158 / JCM 6121 / CCUG 31486 / LMG 2827 / NBRC 12203 / NCIMB 8253 / ATH 2.4.1.) (Rhodobacter sphaeroides).